The chain runs to 510 residues: ATP synthase subunit alpha (510 aa).

169 to 176 is a binding site for ATP; the sequence is GDRQTGKT.

Belongs to the ATPase alpha/beta chains family. F-type ATPases have 2 components, CF(1) - the catalytic core - and CF(0) - the membrane proton channel. CF(1) has five subunits: alpha(3), beta(3), gamma(1), delta(1), epsilon(1). CF(0) has three main subunits: a(1), b(2) and c(9-12). The alpha and beta chains form an alternating ring which encloses part of the gamma chain. CF(1) is attached to CF(0) by a central stalk formed by the gamma and epsilon chains, while a peripheral stalk is formed by the delta and b chains.

The protein resides in the cell inner membrane. It catalyses the reaction ATP + H2O + 4 H(+)(in) = ADP + phosphate + 5 H(+)(out). Functionally, produces ATP from ADP in the presence of a proton gradient across the membrane. The alpha chain is a regulatory subunit. This Rickettsia peacockii (strain Rustic) protein is ATP synthase subunit alpha.